A 190-amino-acid polypeptide reads, in one-letter code: B3 domain-containing protein At4g01580 (190 aa).

A disordered region spans residues 1–25; the sequence is MVITRNMKARATSVSHRQSQQDPES. Polar residues predominate over residues 12–23; that stretch reads TSVSHRQSQQDP. Positions 29-122 form a DNA-binding region, TF-B3; the sequence is KFFKLVLPST…SFRVIIFNAS (94 aa).

Its subcellular location is the nucleus. This chain is B3 domain-containing protein At4g01580, found in Arabidopsis thaliana (Mouse-ear cress).